Consider the following 163-residue polypeptide: Disulfide bond formation protein B (163 aa).

At 1–9 (MRLASPRSL) the chain is on the cytoplasmic side. A helical membrane pass occupies residues 10–26 (FVIAFLGSALLIAIALY). The Periplasmic portion of the chain corresponds to 27–44 (MEHVMGLAPCPLCIVQRI). An intrachain disulfide couples Cys36 to Cys39. Residues 45-61 (CVIGFGLVCLVAAIHGP) form a helical membrane-spanning segment. Over 62 to 67 (AKVGRR) the chain is Cytoplasmic. The helical transmembrane segment at 68 to 85 (VYAAIAALFVAAGAATAI) threads the bilayer. The Periplasmic segment spans residues 86–142 (RQIWLQSVPADQLPSCLPSLEYMMEALPFQEIARLVLHGTAECAEVSWTMLGMSIPE). Residues Cys101 and Cys128 are joined by a disulfide bond. A helical membrane pass occupies residues 143–161 (WSLLGFIGMAIVCLWQLLR). Topologically, residues 162 to 163 (RD) are cytoplasmic.

Belongs to the DsbB family.

The protein localises to the cell inner membrane. In terms of biological role, required for disulfide bond formation in some periplasmic proteins. Acts by oxidizing the DsbA protein. In Stutzerimonas stutzeri (strain A1501) (Pseudomonas stutzeri), this protein is Disulfide bond formation protein B.